We begin with the raw amino-acid sequence, 115 residues long: Large ribosomal subunit protein bL20c (115 aa).

It belongs to the bacterial ribosomal protein bL20 family.

The protein resides in the plastid. It localises to the chloroplast. Binds directly to 23S ribosomal RNA and is necessary for the in vitro assembly process of the 50S ribosomal subunit. It is not involved in the protein synthesizing functions of that subunit. The chain is Large ribosomal subunit protein bL20c from Physcomitrium patens (Spreading-leaved earth moss).